Reading from the N-terminus, the 326-residue chain is PDZ domain-containing protein MAGIX (326 aa).

The interval 1 to 32 (MDSHAGNTADPRGSRRGVGLQGSGSPRARQLL) is disordered. Residues 128–212 (SVELVRGPAG…RLCLVLQRPQ (85 aa)) form the PDZ domain. Residues 214–267 (MNGSRSKEVGGGHQKTDRIPDPRGGRMMESRGTISPVHHRPKTRTGPGPSPESV) form a disordered region. The segment covering 218–242 (RSKEVGGGHQKTDRIPDPRGGRMME) has biased composition (basic and acidic residues). Ser-263 bears the Phosphoserine mark.

In Rattus norvegicus (Rat), this protein is PDZ domain-containing protein MAGIX (Magix).